The chain runs to 283 residues: Urease accessory protein UreD (283 aa).

It belongs to the UreD family. As to quaternary structure, ureD, UreF and UreG form a complex that acts as a GTP-hydrolysis-dependent molecular chaperone, activating the urease apoprotein by helping to assemble the nickel containing metallocenter of UreC. The UreE protein probably delivers the nickel.

The protein resides in the cytoplasm. Its function is as follows. Required for maturation of urease via the functional incorporation of the urease nickel metallocenter. This chain is Urease accessory protein UreD, found in Acaryochloris marina (strain MBIC 11017).